We begin with the raw amino-acid sequence, 185 residues long: Protein GrpE (185 aa).

Basic and acidic residues predominate over residues 1 to 20; the sequence is MSQEKKEELQSEAQVTKEET. The disordered stretch occupies residues 1–28; it reads MSQEKKEELQSEAQVTKEETPQANEAAA.

The protein belongs to the GrpE family. As to quaternary structure, homodimer.

The protein resides in the cytoplasm. Functionally, participates actively in the response to hyperosmotic and heat shock by preventing the aggregation of stress-denatured proteins, in association with DnaK and GrpE. It is the nucleotide exchange factor for DnaK and may function as a thermosensor. Unfolded proteins bind initially to DnaJ; upon interaction with the DnaJ-bound protein, DnaK hydrolyzes its bound ATP, resulting in the formation of a stable complex. GrpE releases ADP from DnaK; ATP binding to DnaK triggers the release of the substrate protein, thus completing the reaction cycle. Several rounds of ATP-dependent interactions between DnaJ, DnaK and GrpE are required for fully efficient folding. This chain is Protein GrpE, found in Sulfurimonas denitrificans (strain ATCC 33889 / DSM 1251) (Thiomicrospira denitrificans (strain ATCC 33889 / DSM 1251)).